A 186-amino-acid chain; its full sequence is Peptidyl-tRNA hydrolase (186 aa).

Y14 serves as a coordination point for tRNA. H19 serves as the catalytic Proton acceptor. Y64, N66, and N112 together coordinate tRNA.

Belongs to the PTH family. Monomer.

The protein localises to the cytoplasm. The catalysed reaction is an N-acyl-L-alpha-aminoacyl-tRNA + H2O = an N-acyl-L-amino acid + a tRNA + H(+). Functionally, hydrolyzes ribosome-free peptidyl-tRNAs (with 1 or more amino acids incorporated), which drop off the ribosome during protein synthesis, or as a result of ribosome stalling. In terms of biological role, catalyzes the release of premature peptidyl moieties from peptidyl-tRNA molecules trapped in stalled 50S ribosomal subunits, and thus maintains levels of free tRNAs and 50S ribosomes. The sequence is that of Peptidyl-tRNA hydrolase from Mesoplasma florum (strain ATCC 33453 / NBRC 100688 / NCTC 11704 / L1) (Acholeplasma florum).